A 476-amino-acid polypeptide reads, in one-letter code: Bifunctional protein HldE (476 aa).

The ribokinase stretch occupies residues 1 to 319 (MKPTLPNYDQ…EAIHGSQDSG (319 aa)). 195 to 198 (NMLE) lines the ATP pocket. The active site involves Asp-264. Residues 344–476 (MTNGCFDILH…IIEAIKGGRG (133 aa)) are cytidylyltransferase.

It in the N-terminal section; belongs to the carbohydrate kinase PfkB family. In the C-terminal section; belongs to the cytidylyltransferase family. As to quaternary structure, homodimer.

It carries out the reaction D-glycero-beta-D-manno-heptose 7-phosphate + ATP = D-glycero-beta-D-manno-heptose 1,7-bisphosphate + ADP + H(+). It catalyses the reaction D-glycero-beta-D-manno-heptose 1-phosphate + ATP + H(+) = ADP-D-glycero-beta-D-manno-heptose + diphosphate. Its pathway is nucleotide-sugar biosynthesis; ADP-L-glycero-beta-D-manno-heptose biosynthesis; ADP-L-glycero-beta-D-manno-heptose from D-glycero-beta-D-manno-heptose 7-phosphate: step 1/4. It functions in the pathway nucleotide-sugar biosynthesis; ADP-L-glycero-beta-D-manno-heptose biosynthesis; ADP-L-glycero-beta-D-manno-heptose from D-glycero-beta-D-manno-heptose 7-phosphate: step 3/4. Functionally, catalyzes the phosphorylation of D-glycero-D-manno-heptose 7-phosphate at the C-1 position to selectively form D-glycero-beta-D-manno-heptose-1,7-bisphosphate. In terms of biological role, catalyzes the ADP transfer from ATP to D-glycero-beta-D-manno-heptose 1-phosphate, yielding ADP-D-glycero-beta-D-manno-heptose. This Aliivibrio fischeri (strain ATCC 700601 / ES114) (Vibrio fischeri) protein is Bifunctional protein HldE.